A 281-amino-acid polypeptide reads, in one-letter code: Auxin-responsive protein IAA10 (281 aa).

Disordered stretches follow at residues 1 to 115 (MRGG…VVGW) and 130 to 157 (AKEN…EEGE). Over residues 7-17 (GPTAGEPPGTE) the composition is skewed to low complexity. The span at 18-35 (AEAEEVEESSAGDDEELE) shows a compositional bias: acidic residues. The short motif at 36–40 (LGLSL) is the EAR-like (transcriptional repression) element. Composition is skewed to low complexity over residues 36–49 (LGLS…QQQQ) and 63–84 (PAAA…AAAA). A compositionally biased stretch (basic and acidic residues) spans 133–157 (NTSETDTKKTATNESDVQKDKEEGE). The PB1 domain maps to 163 to 259 (AGWVKVNMDG…KRLRIMRTSD (97 aa)).

Belongs to the Aux/IAA family. As to quaternary structure, homodimers and heterodimers. In terms of tissue distribution, highly expressed in flowers. Expressed in shoots.

The protein localises to the nucleus. Its function is as follows. Aux/IAA proteins are short-lived transcriptional factors that function as repressors of early auxin response genes at low auxin concentrations. The polypeptide is Auxin-responsive protein IAA10 (IAA10) (Oryza sativa subsp. indica (Rice)).